The sequence spans 281 residues: Auxin-responsive protein IAA10 (281 aa).

Disordered regions lie at residues 1-115 and 130-157; these read MRGG…VVGW and AKENTSETDTKKTATNESDVQKDKEEGE. The span at 7 to 17 shows a compositional bias: low complexity; that stretch reads GPTAGEPPGTE. The span at 18 to 35 shows a compositional bias: acidic residues; it reads AEAEEVEESSAGDDEELE. Residues 36 to 40 carry the EAR-like (transcriptional repression) motif; it reads LGLSL. 2 stretches are compositionally biased toward low complexity: residues 36–49 and 63–84; these read LGLSLGSKKQQQQQ and PAAALSPDSSVSSSSPAAAAAA. Basic and acidic residues predominate over residues 133-157; sequence NTSETDTKKTATNESDVQKDKEEGE. One can recognise a PB1 domain in the interval 163 to 259; it reads AGWVKVNMDG…KRLRIMRTSD (97 aa).

This sequence belongs to the Aux/IAA family. Homodimers and heterodimers. In terms of tissue distribution, highly expressed in flowers. Expressed in shoots.

The protein resides in the nucleus. Aux/IAA proteins are short-lived transcriptional factors that function as repressors of early auxin response genes at low auxin concentrations. In Oryza sativa subsp. indica (Rice), this protein is Auxin-responsive protein IAA10 (IAA10).